A 493-amino-acid chain; its full sequence is Glutamyl-tRNA(Gln) amidotransferase subunit A (493 aa).

Residues Lys-79 and Ser-159 each act as charge relay system in the active site. The active-site Acyl-ester intermediate is the Ser-183.

This sequence belongs to the amidase family. GatA subfamily. In terms of assembly, heterotrimer of A, B and C subunits.

It carries out the reaction L-glutamyl-tRNA(Gln) + L-glutamine + ATP + H2O = L-glutaminyl-tRNA(Gln) + L-glutamate + ADP + phosphate + H(+). Functionally, allows the formation of correctly charged Gln-tRNA(Gln) through the transamidation of misacylated Glu-tRNA(Gln) in organisms which lack glutaminyl-tRNA synthetase. The reaction takes place in the presence of glutamine and ATP through an activated gamma-phospho-Glu-tRNA(Gln). This Rhizobium leguminosarum bv. trifolii (strain WSM2304) protein is Glutamyl-tRNA(Gln) amidotransferase subunit A.